The sequence spans 497 residues: Vacuolar-processing enzyme (497 aa).

Residues 1–31 (METHKSLLFFTNYVLFLVFTLSFLPIPGLLA) form the signal peptide. The active site involves histidine 180. Catalysis depends on cysteine 222, which acts as the Nucleophile. A disulfide bond links cysteine 255 and cysteine 269. 2 N-linked (GlcNAc...) asparagine glycosylation sites follow: asparagine 320 and asparagine 374. Cystine bridges form between cysteine 433/cysteine 463 and cysteine 445/cysteine 480.

It belongs to the peptidase C13 family.

Functionally, asparagine-specific endopeptidase involved in the processing of vacuolar seed protein precursors into the mature forms. The protein is Vacuolar-processing enzyme of Ricinus communis (Castor bean).